The sequence spans 162 residues: Selenoprotein F (162 aa).

Residues 1-28 (MAAGQGGWLRPALGLRLLLATAFQAVSA) form the signal peptide. Position 93 (Sec93) is a non-standard amino acid, selenocysteine.

Belongs to the selenoprotein M/F family. Forms a tight complex with UGGT1/UGCGL1. Interacts with UGGT2/UGCGL2. Interacts with RDH11. Highest levels in prostate, lower levels in brain, lung, thyroid gland, and large intestine.

The protein resides in the endoplasmic reticulum lumen. Functionally, may be involved in redox reactions associated with the formation of disulfide bonds. May contribute to the quality control of protein folding in the endoplasmic reticulum. May regulate protein folding by enhancing the catalytic activity of UGGT1/UGCGL1 and UGGT2/UGCGL2. In Rattus norvegicus (Rat), this protein is Selenoprotein F.